Consider the following 330-residue polypeptide: Ribose-phosphate pyrophosphokinase (330 aa).

55-57 (DGE) is a binding site for ATP. Residues histidine 148 and aspartate 187 each contribute to the Mg(2+) site. Lysine 211 is an active-site residue. D-ribose 5-phosphate is bound by residues arginine 213, aspartate 237, and 241-245 (DTGGT).

It belongs to the ribose-phosphate pyrophosphokinase family. Class I subfamily. In terms of assembly, homohexamer. Mg(2+) serves as cofactor.

The protein resides in the cytoplasm. The catalysed reaction is D-ribose 5-phosphate + ATP = 5-phospho-alpha-D-ribose 1-diphosphate + AMP + H(+). It functions in the pathway metabolic intermediate biosynthesis; 5-phospho-alpha-D-ribose 1-diphosphate biosynthesis; 5-phospho-alpha-D-ribose 1-diphosphate from D-ribose 5-phosphate (route I): step 1/1. Its function is as follows. Involved in the biosynthesis of the central metabolite phospho-alpha-D-ribosyl-1-pyrophosphate (PRPP) via the transfer of pyrophosphoryl group from ATP to 1-hydroxyl of ribose-5-phosphate (Rib-5-P). In Nostoc sp. (strain PCC 7120 / SAG 25.82 / UTEX 2576), this protein is Ribose-phosphate pyrophosphokinase.